The following is a 1131-amino-acid chain: PolyA-specific ribonuclease subunit panl-2 (1131 aa).

The USP domain maps to 489–864 (VTMQSTHGMN…LPALLAYKKK (376 aa)). Residues 909-1074 (VGLDAEFIKI…VDARYALKLY (166 aa)) enclose the Exonuclease domain. The segment covering 1104–1115 (QTSSPLVVSTTR) has biased composition (polar residues). The disordered stretch occupies residues 1104-1131 (QTSSPLVVSTTRKTPEDTNPADAAPKSV).

This is PolyA-specific ribonuclease subunit panl-2 from Caenorhabditis elegans.